A 747-amino-acid chain; its full sequence is Putative ankyrin repeat protein FPV222 (747 aa).

ANK repeat units follow at residues 38 to 67, 103 to 132, 136 to 165, 169 to 198, 202 to 231, 234 to 263, 294 to 323, 328 to 357, 361 to 393, 397 to 426, 430 to 460, 464 to 493, 495 to 524, and 529 to 559; these read DNCT…DPNI, NYRN…LVNM, KNIT…NTNA, YGET…NVNV, DSIT…DTNA, LERF…NTNV, PCTV…NPDI, TSTY…YTDV, QQNT…SFNL, KGRT…DTNI, MSFT…DPNL, KEVS…DIKP, NECY…ELEV, and DHYV…DLNK.

The polypeptide is Putative ankyrin repeat protein FPV222 (Vertebrata (FPV)).